The sequence spans 593 residues: Isocitrate dehydrogenase kinase/phosphatase (593 aa).

ATP-binding positions include 324-330 (APGIRGL) and K345. D380 is an active-site residue.

The protein belongs to the AceK family.

The protein localises to the cytoplasm. The enzyme catalyses L-seryl-[isocitrate dehydrogenase] + ATP = O-phospho-L-seryl-[isocitrate dehydrogenase] + ADP + H(+). Functionally, bifunctional enzyme which can phosphorylate or dephosphorylate isocitrate dehydrogenase (IDH) on a specific serine residue. This is a regulatory mechanism which enables bacteria to bypass the Krebs cycle via the glyoxylate shunt in response to the source of carbon. When bacteria are grown on glucose, IDH is fully active and unphosphorylated, but when grown on acetate or ethanol, the activity of IDH declines drastically concomitant with its phosphorylation. This Dechloromonas aromatica (strain RCB) protein is Isocitrate dehydrogenase kinase/phosphatase.